Here is a 602-residue protein sequence, read N- to C-terminus: RecBCD enzyme subunit RecD (602 aa).

Position 174–181 (174–181 (GGPGTGKT)) interacts with ATP.

It belongs to the RecD family. In terms of assembly, heterotrimer of RecB, RecC and RecD. All subunits contribute to DNA-binding.

The catalysed reaction is Couples ATP hydrolysis with the unwinding of duplex DNA at the replication fork by translocating in the 5'-3' direction. This creates two antiparallel DNA single strands (ssDNA). The leading ssDNA polymer is the template for DNA polymerase III holoenzyme which synthesizes a continuous strand.. The enzyme catalyses ATP + H2O = ADP + phosphate + H(+). A helicase/nuclease that prepares dsDNA breaks (DSB) for recombinational DNA repair. Binds to DSBs and unwinds DNA via a highly rapid and processive ATP-dependent bidirectional helicase activity. Unwinds dsDNA until it encounters a Chi (crossover hotspot instigator) sequence from the 3' direction. Cuts ssDNA a few nucleotides 3' to the Chi site. The properties and activities of the enzyme are changed at Chi. The Chi-altered holoenzyme produces a long 3'-ssDNA overhang and facilitates RecA-binding to the ssDNA for homologous DNA recombination and repair. Holoenzyme degrades any linearized DNA that is unable to undergo homologous recombination. In the holoenzyme this subunit has ssDNA-dependent ATPase and 5'-3' helicase activity. When added to pre-assembled RecBC greatly stimulates nuclease activity and augments holoenzyme processivity. Negatively regulates the RecA-loading ability of RecBCD. The sequence is that of RecBCD enzyme subunit RecD from Buchnera aphidicola subsp. Schizaphis graminum (strain Sg).